The chain runs to 171 residues: Ribosome maturation factor RimP (171 aa).

This sequence belongs to the RimP family.

It is found in the cytoplasm. Functionally, required for maturation of 30S ribosomal subunits. The chain is Ribosome maturation factor RimP from Anaeromyxobacter sp. (strain Fw109-5).